Consider the following 288-residue polypeptide: 2-methoxy-6-polyprenyl-1,4-benzoquinol methylase, mitochondrial (288 aa).

Threonine 68, aspartate 102, and serine 146 together coordinate S-adenosyl-L-methionine. Low complexity predominate over residues proline 260–proline 270. The tract at residues proline 260–alanine 288 is disordered. Positions cysteine 279–alanine 288 are enriched in basic and acidic residues.

This sequence belongs to the class I-like SAM-binding methyltransferase superfamily. MenG/UbiE family. Component of a multi-subunit COQ enzyme complex.

The protein localises to the mitochondrion inner membrane. It carries out the reaction a 2-methoxy-6-(all-trans-polyprenyl)benzene-1,4-diol + S-adenosyl-L-methionine = a 5-methoxy-2-methyl-3-(all-trans-polyprenyl)benzene-1,4-diol + S-adenosyl-L-homocysteine + H(+). It functions in the pathway cofactor biosynthesis; ubiquinone biosynthesis. In terms of biological role, methyltransferase required for the conversion of 2-polyprenyl-6-methoxy-1,4-benzoquinol (DDMQH2) to 2-polyprenyl-3-methyl-6-methoxy-1,4-benzoquinol (DMQH2). The chain is 2-methoxy-6-polyprenyl-1,4-benzoquinol methylase, mitochondrial from Leishmania donovani.